Reading from the N-terminus, the 95-residue chain is Aspartyl/glutamyl-tRNA(Asn/Gln) amidotransferase subunit C (95 aa).

Belongs to the GatC family. Heterotrimer of A, B and C subunits.

The enzyme catalyses L-glutamyl-tRNA(Gln) + L-glutamine + ATP + H2O = L-glutaminyl-tRNA(Gln) + L-glutamate + ADP + phosphate + H(+). The catalysed reaction is L-aspartyl-tRNA(Asn) + L-glutamine + ATP + H2O = L-asparaginyl-tRNA(Asn) + L-glutamate + ADP + phosphate + 2 H(+). Allows the formation of correctly charged Asn-tRNA(Asn) or Gln-tRNA(Gln) through the transamidation of misacylated Asp-tRNA(Asn) or Glu-tRNA(Gln) in organisms which lack either or both of asparaginyl-tRNA or glutaminyl-tRNA synthetases. The reaction takes place in the presence of glutamine and ATP through an activated phospho-Asp-tRNA(Asn) or phospho-Glu-tRNA(Gln). The polypeptide is Aspartyl/glutamyl-tRNA(Asn/Gln) amidotransferase subunit C (Azotobacter vinelandii (strain DJ / ATCC BAA-1303)).